A 432-amino-acid chain; its full sequence is Guanine nucleotide-binding protein subunit alpha (432 aa).

The tract at residues 1-97 (MGGCMSTPEA…SKGNKDRSNQ (97 aa)) is disordered. Gly-2 carries the N-myristoyl glycine lipid modification. Cys-4 carries the S-palmitoyl cysteine lipid modification. Low complexity predominate over residues 21–52 (PSTSTSSRPPQASTSATATAAGAGTSAANGTA). The 322-residue stretch at 111 to 432 (KECKILLLGS…QNALRDSGIL (322 aa)) folds into the G-alpha domain. The tract at residues 114–127 (KILLLGSGESGKST) is G1 motif. Glu-122, Ser-123, Gly-124, Lys-125, Ser-126, Thr-127, Asp-230, Leu-255, Thr-261, Gly-283, Asn-349, Lys-350, Asp-352, and Ala-404 together coordinate GTP. Ser-126 contributes to the Mg(2+) binding site. Residues 253-261 (DVLRARTKT) are G2 motif. Position 261 (Thr-261) interacts with Mg(2+). The G3 motif stretch occupies residues 276 to 285 (IHMFDVGGQR). Positions 345–352 (ILFLNKID) are G4 motif. Residues 402–407 (TQATDT) are G5 motif.

The protein belongs to the G-alpha family. In terms of assembly, g proteins are composed of 3 units; alpha, beta and gamma. The alpha chain contains the guanine nucleotide binding site. It depends on Mg(2+) as a cofactor.

Functionally, guanine nucleotide-binding proteins (G proteins) are involved as modulators or transducers in various transmembrane signaling systems. Involved in the mating pathway. This is Guanine nucleotide-binding protein subunit alpha (GPA1) from Cryptococcus neoformans var. neoformans serotype D (strain B-3501A) (Filobasidiella neoformans).